Reading from the N-terminus, the 348-residue chain is EGF-like domain-containing protein 1 (348 aa).

Residues 1–19 (MFYLSTFMTIVISLSLVSC) form the signal peptide. The region spanning 60-92 (TGSNCTVTCQNNGKCYDGSKCLCSSDYTGDLCE) is the EGF-like domain. Intrachain disulfides connect C64–C74, C68–C80, and C82–C91. Residues 99–342 (RCTLDAVVFE…PTCAAPXVGQ (244 aa)) enclose the ZP domain.

In terms of tissue distribution, prismatic layer of shell (at protein level). Expressed primarily in the mantle with highest level in the mantle edge and lower level in the mantle pallium.

The protein localises to the secreted. In Pinctada maxima (Silver-lipped pearl oyster), this protein is EGF-like domain-containing protein 1.